A 609-amino-acid polypeptide reads, in one-letter code: Laccase-1 (609 aa).

An N-terminal signal peptide occupies residues 1–20; that stretch reads MYLSTVLFPLLALNLGLSHA. Positions 45–141 constitute a Plastocyanin-like 1 domain; it reads VFTNGEYPGP…DGQVGAMYIR (97 aa). Residue Asn-75 is glycosylated (N-linked (GlcNAc...) asparagine). Cu cation is bound by residues His-79, His-81, His-123, and His-125. A glycan (N-linked (GlcNAc...) asparagine) is linked at Asn-257. In terms of domain architecture, Plastocyanin-like 2 spans 270–372; that stretch reads TPSSVEPPVI…MSVYAILSYV (103 aa). 3 N-linked (GlcNAc...) asparagine glycosylation sites follow: Asn-403, Asn-443, and Asn-486. Residues 463 to 602 form the Plastocyanin-like 3 domain; the sequence is STPLLFEPDP…MGGMALALLD (140 aa). His-508, His-511, and His-513 together coordinate Cu cation. 2 N-linked (GlcNAc...) asparagine glycosylation sites follow: Asn-531 and Asn-546. Cu cation-binding residues include His-585, Cys-586, His-587, and His-591.

It belongs to the multicopper oxidase family. Cu cation is required as a cofactor.

The protein resides in the secreted. The enzyme catalyses 4 hydroquinone + O2 = 4 benzosemiquinone + 2 H2O. Functionally, required for the conversion of the yellow polyketide pigment synthesized by wA to the conidial green pigment. The protein is Laccase-1 (yA) of Emericella nidulans (strain FGSC A4 / ATCC 38163 / CBS 112.46 / NRRL 194 / M139) (Aspergillus nidulans).